The primary structure comprises 439 residues: Microfibrillar-associated protein 1A (439 aa).

The disordered stretch occupies residues 1 to 200 (MSVPSALMKQ…SEDEMEPRLK (200 aa)). S2 carries the N-acetylserine modification. Positions 23–34 (RNEKGEISMEKV) are enriched in basic and acidic residues. Phosphoserine occurs at positions 52 and 53. Positions 61 to 70 (QFIKKAKEQE) are enriched in basic and acidic residues. A Glycyl lysine isopeptide (Lys-Gly) (interchain with G-Cter in SUMO2) cross-link involves residue K67. The segment covering 71–81 (AEPEEQEEDSS) has biased composition (acidic residues). A phosphoserine mark is found at S94, S116, S118, S132, and S133. 2 stretches are compositionally biased toward acidic residues: residues 112-122 (VVGESDSEVEG) and 131-144 (DSSE…DDEE). Over residues 145–163 (IERRRGMMRQRAQERKNEE) the composition is skewed to basic and acidic residues. Positions 178-195 (ESESESEYEEYTDSEDEM) are enriched in acidic residues. A Glycyl lysine isopeptide (Lys-Gly) (interchain with G-Cter in SUMO2) cross-link involves residue K249. Position 267 is a phosphothreonine (T267). K357 is covalently cross-linked (Glycyl lysine isopeptide (Lys-Gly) (interchain with G-Cter in SUMO2)). A Phosphoserine modification is found at S361. Glycyl lysine isopeptide (Lys-Gly) (interchain with G-Cter in SUMO2) cross-links involve residues K371, K381, K415, and K418. S432 is subject to Phosphoserine.

Belongs to the MFAP1 family. Component of the spliceosome B complex. Interacts with PRPF38A (via N-terminal interaction domain).

The protein resides in the nucleus. Its function is as follows. Involved in pre-mRNA splicing as a component of the spliceosome. The sequence is that of Microfibrillar-associated protein 1A from Mus musculus (Mouse).